Here is a 796-residue protein sequence, read N- to C-terminus: Polyribonucleotide nucleotidyltransferase (796 aa).

Mg(2+)-binding residues include Asp-490 and Asp-496. One can recognise a KH domain in the interval 557-616 (PRIESIFINKDKIRNVIGSGGKNIRDICEKTGAKIEIIQDGTVMIYAVNNEAVEYAKSMI). The region spanning 626 to 693 (GKVFEGTVVE…DREHIQLSMR (68 aa)) is the S1 motif domain. Low complexity-rich tracts occupy residues 717 to 728 (DDSCGSTGGSSF), 747 to 759 (GGSSRSSRRNSNG), and 769 to 784 (SSNGFGNNNRSFSNSR). Positions 717 to 796 (DDSCGSTGGS…HDVPRKPRFF (80 aa)) are disordered. A compositionally biased stretch (basic and acidic residues) spans 785-796 (NGHDVPRKPRFF).

The protein belongs to the polyribonucleotide nucleotidyltransferase family. It depends on Mg(2+) as a cofactor.

The protein resides in the cytoplasm. It carries out the reaction RNA(n+1) + phosphate = RNA(n) + a ribonucleoside 5'-diphosphate. Involved in mRNA degradation. Catalyzes the phosphorolysis of single-stranded polyribonucleotides processively in the 3'- to 5'-direction. This chain is Polyribonucleotide nucleotidyltransferase, found in Ehrlichia chaffeensis (strain ATCC CRL-10679 / Arkansas).